Consider the following 198-residue polypeptide: Mediator of RNA polymerase II transcription subunit 22 (198 aa).

Residues 159–198 are disordered; that stretch reads WGSPEMTSDPSHANHEVSDHLGSQESMQRHRNGSGTSEQS.

It belongs to the Mediator complex subunit 22 family. Component of the Mediator complex.

It localises to the nucleus. In terms of biological role, component of the Mediator complex, a coactivator involved in the regulated transcription of nearly all RNA polymerase II-dependent genes. Mediator functions as a bridge to convey information from gene-specific regulatory proteins to the basal RNA polymerase II transcription machinery. Mediator is recruited to promoters by direct interactions with regulatory proteins and serves as a scaffold for the assembly of a functional preinitiation complex with RNA polymerase II and the general transcription factors. This is Mediator of RNA polymerase II transcription subunit 22 (med22) from Danio rerio (Zebrafish).